The primary structure comprises 292 residues: NIF3-like protein 1 (292 aa).

Belongs to the GTP cyclohydrolase I type 2/NIF3 family.

In Drosophila melanogaster (Fruit fly), this protein is NIF3-like protein 1 (anon-35F/36A).